Here is a 625-residue protein sequence, read N- to C-terminus: Sorting nexin-41 (625 aa).

Positions 1 to 90 are disordered; the sequence is MDYNIFEAVH…STSSHAVVEA (90 aa). Residues 54-86 show a composition bias toward low complexity; it reads SPPSSSSLPSSPAHSSSAGSSRASTSSSTSSHA. Residues 98–235 enclose the PX domain; sequence VSLSMSTTAT…QKFLNPEFNW (138 aa). A 1,2-diacyl-sn-glycero-3-phospho-(1D-myo-inositol-3-phosphate) is bound by residues Arg153, Ser155, Lys179, and Arg202. Coiled-coil stretches lie at residues 437-469 and 539-563; these read QFKI…NESL and QLTE…KDCL.

Belongs to the sorting nexin family. As to quaternary structure, binds to SNX4.

The protein localises to the prevacuolar compartment. The protein resides in the endosome. Its subcellular location is the endosome membrane. Its function is as follows. Involved in proper sorting of the v-SNARE protein SNC1. This is Sorting nexin-41 (SNX41) from Saccharomyces cerevisiae (strain ATCC 204508 / S288c) (Baker's yeast).